Reading from the N-terminus, the 329-residue chain is Delta(7)-sterol 5(6)-desaturase erg32 (329 aa).

2 helical membrane passes run 67-87 (LFLI…SFAY) and 149-169 (FYLF…IYWI). A Fatty acid hydroxylase domain is found at 156 to 281 (ALFLLFSDFL…FFTLFDRLCS (126 aa)). A Histidine box-1 motif is present at residues 170 to 175 (HRALHH). The short motif at 183 to 187 (HKLHH) is the Histidine box-2 element. Residues 210 to 230 (LPYHMFPFFFPLNKYVYLLLF) traverse the membrane as a helical segment. Positions 257–262 (HHAAHH) match the Histidine box-3 motif.

This sequence belongs to the sterol desaturase family. Fe cation serves as cofactor.

Its subcellular location is the endoplasmic reticulum membrane. It is found in the golgi apparatus membrane. The enzyme catalyses episterol + 2 Fe(II)-[cytochrome b5] + O2 + 2 H(+) = 5-dehydroepisterol + 2 Fe(III)-[cytochrome b5] + 2 H2O. It functions in the pathway steroid metabolism; ergosterol biosynthesis. Its function is as follows. C-5 sterol desaturase; part of the third module of ergosterol biosynthesis pathway that includes by the late steps of the pathway. Erg31 and erg32 catalyze the introduction of a C-5 double bond in the B ring to produce 5-dehydroepisterol. The third module or late pathway involves the ergosterol synthesis itself through consecutive reactions that mainly occur in the endoplasmic reticulum (ER) membrane. Firstly, the squalene synthase erg9 catalyzes the condensation of 2 farnesyl pyrophosphate moieties to form squalene, which is the precursor of all steroids. Secondly, squalene is converted into lanosterol by the consecutive action of the squalene epoxidase erg1 and the lanosterol synthase erg7. The lanosterol 14-alpha-demethylase erg11/cyp1 catalyzes C14-demethylation of lanosterol to produce 4,4'-dimethyl cholesta-8,14,24-triene-3-beta-ol. In the next steps, a complex process involving various demethylation, reduction and desaturation reactions catalyzed by the C-14 reductase erg24 and the C-4 demethylation complex erg25-erg26-erg27 leads to the production of zymosterol. Erg28 likely functions in the C-4 demethylation complex reaction by tethering erg26 and Erg27 to the endoplasmic reticulum or to facilitate interaction between these proteins. Then, the sterol 24-C-methyltransferase erg6 catalyzes the methyl transfer from S-adenosyl-methionine to the C-24 of zymosterol to form fecosterol. The C-8 sterol isomerase erg2 catalyzes the reaction which results in unsaturation at C-7 in the B ring of sterols and thus converts fecosterol to episterol. The sterol-C5-desaturases erg31 and erg32 then catalyze the introduction of a C-5 double bond in the B ring to produce 5-dehydroepisterol. The C-22 sterol desaturase erg5 further converts 5-dehydroepisterol into ergosta-5,7,22,24(28)-tetraen-3beta-ol by forming the C-22(23) double bond in the sterol side chain. Finally, ergosta-5,7,22,24(28)-tetraen-3beta-ol is substrate of the C-24(28) sterol reductase erg4 to produce ergosterol. In the genus Schizosaccharomyces, a second route exists between lanosterol and fecosterol, via the methylation of lanosterol to eburicol by erg6, followed by C14-demethylation by erg11/cyp1 and C4-demethylation by the demethylation complex erg25-erg26-erg27. The polypeptide is Delta(7)-sterol 5(6)-desaturase erg32 (Schizosaccharomyces pombe (strain 972 / ATCC 24843) (Fission yeast)).